A 615-amino-acid polypeptide reads, in one-letter code: Ras association domain-containing protein 1 homolog (615 aa).

2 disordered regions span residues 1 to 29 (MLRS…PTYQ) and 69 to 89 (SDDE…QSIG). Residues 76–87 (TSSTSSPQSEQS) show a composition bias toward low complexity. Residues 164 to 214 (NHSFKTHSLLHPTWCDKCGDFIWGILKEALKCEHCNYTCHARCRDLVTLDC) form a Phorbol-ester/DAG-type zinc finger. The tract at residues 249–268 (PAMSSSTGSDKENGNGNSAG) is disordered. Polar residues predominate over residues 251-268 (MSSSTGSDKENGNGNSAG). The 101-residue stretch at 396–496 (KTTSLRTITS…RALVLQENDT (101 aa)) folds into the Ras-associating domain. The SARAH domain occupies 498–545 (DILWDAFEIPELENFLRILGMEEKQYVFQTQQKYQQYRYHLDAELRQR).

In terms of assembly, interacts with rab-39 (GTP-bound form). Interacts (via SARAH domain) with cst-1; the interaction is required for the phosphorylation of cst-1. In terms of tissue distribution, expressed in the pharynx, epithelial cells, ciliated neurons in the head, body wall muscles, hypodermis, vulva, gonadal sheath cells, tail hypodermis and in coelomocytes. Expressed in the pharynx, neurons and vulva.

The protein localises to the cytoplasm. The protein resides in the cytoskeleton. In terms of biological role, involved in embryonic morphogenesis. Plays a role in the organization of apical filamentous actin in epithelial cells of the developing embryo. May play a role in let-60-mediated vulval development. May induce nuclear condensation. Positively regulates the oxidative stress response, and this may be in association with the small GTPase rab-39. Not required for muscle integrity. This chain is Ras association domain-containing protein 1 homolog, found in Caenorhabditis elegans.